We begin with the raw amino-acid sequence, 509 residues long: Maturase K (509 aa).

Belongs to the intron maturase 2 family. MatK subfamily.

The protein resides in the plastid. Its subcellular location is the chloroplast. In terms of biological role, usually encoded in the trnK tRNA gene intron. Probably assists in splicing its own and other chloroplast group II introns. The polypeptide is Maturase K (Clematis lasiantha (Pipestem clematis)).